Reading from the N-terminus, the 81-residue chain is Antimicrobial peptide D2 (81 aa).

The signal sequence occupies residues methionine 1–glutamate 31. 4 disulfides stabilise this stretch: cysteine 34-cysteine 81, cysteine 45-cysteine 66, cysteine 51-cysteine 75, and cysteine 55-cysteine 77.

Functionally, antimicrobial peptide probably active against fungi like B.sorokiniana, F.oxysporum, F.graminearum, F.avenaceum, B.cinerea, P.beta, P.infestans and P.debaryanum. In Stellaria media (Common chickweed), this protein is Antimicrobial peptide D2.